We begin with the raw amino-acid sequence, 23 residues long: Ascaphin-1 (23 aa).

Asparagine 23 is modified (asparagine amide).

Expressed by the skin glands.

It is found in the secreted. Functionally, antimicrobial peptide that shows higher potency against Gram-negative bacteria than against Gram-positive bacteria. Has a very week hemolytic activity. The sequence is that of Ascaphin-1 from Ascaphus truei (Coastal tailed frog).